A 169-amino-acid chain; its full sequence is Protein YABBY 7 (169 aa).

The segment at 21–48 adopts a C4-type zinc-finger fold; it reads CSFCATVLLVSVPCSSVLRVVAVQCGHC. The disordered stretch occupies residues 63-122; the sequence is SASIELTPQELDAGPPPGEYSDESSGDDREGRDAEDDAPAPAAAAVANKPPGRKQRTPSA.

The protein belongs to the YABBY family. Expressed in leaf sheaths and flowers.

It localises to the nucleus. This chain is Protein YABBY 7 (YAB7), found in Oryza sativa subsp. japonica (Rice).